The following is a 180-amino-acid chain: uncharacterized protein (180 aa).

This is an uncharacterized protein from Staphylococcus aureus.